A 336-amino-acid polypeptide reads, in one-letter code: Mitochondrial import receptor subunit TOM40 homolog (336 aa).

The interval 1–58 is disordered; sequence MGNVLAASSPAPPAAGSPPAPGLVSVPPGFTMPPVAGLTPTPDKKETQEDRLPNPGTF. Over residues 10–21 the composition is skewed to pro residues; sequence PAPPAAGSPPAP. A compositionally biased stretch (basic and acidic residues) spans 42 to 52; it reads PDKKETQEDRL.

It belongs to the Tom40 family. Forms part of the preprotein translocase complex of the outer mitochondrial membrane (TOM complex). Interacts with mitochondrial targeting sequences.

It localises to the mitochondrion outer membrane. Functionally, channel-forming protein essential for import of protein precursors into mitochondria. The polypeptide is Mitochondrial import receptor subunit TOM40 homolog (tomm40) (Xenopus tropicalis (Western clawed frog)).